Reading from the N-terminus, the 130-residue chain is Small ribosomal subunit protein uS9 (130 aa).

Belongs to the universal ribosomal protein uS9 family.

The sequence is that of Small ribosomal subunit protein uS9 from Acidovorax ebreus (strain TPSY) (Diaphorobacter sp. (strain TPSY)).